The following is a 413-amino-acid chain: Chloramphenicol efflux pump MT0201 (413 aa).

Helical transmembrane passes span 23–43 (LSVL…PVGA), 55–75 (VVLV…TTVP), 89–109 (LVVS…APNF), 110–130 (AVLA…WAVI), 150–170 (IYIG…AMSL), 176–196 (LAAV…RLAL), 226–246 (VLTM…VVII), 256–276 (NLAW…PLVA), 286–306 (AVIV…ALAF), 312–332 (AATA…ATAV), 353–373 (GLYV…GGLL), and 378–398 (LAMM…GMTV).

This sequence belongs to the major facilitator superfamily.

Its subcellular location is the cell membrane. In terms of biological role, active efflux pump that plays an important role in chloramphenicol resistance. This Mycobacterium tuberculosis (strain CDC 1551 / Oshkosh) protein is Chloramphenicol efflux pump MT0201.